The sequence spans 615 residues: DNA mismatch repair protein MutL (615 aa).

A disordered region spans residues 363–397 (FAEPAAREPVAPRYTPAPASGSRPAAPWPNAQPGY). The segment covering 364–391 (AEPAAREPVAPRYTPAPASGSRPAAPWP) has biased composition (low complexity).

It belongs to the DNA mismatch repair MutL/HexB family.

This protein is involved in the repair of mismatches in DNA. It is required for dam-dependent methyl-directed DNA mismatch repair. May act as a 'molecular matchmaker', a protein that promotes the formation of a stable complex between two or more DNA-binding proteins in an ATP-dependent manner without itself being part of a final effector complex. The polypeptide is DNA mismatch repair protein MutL (Escherichia coli (strain ATCC 8739 / DSM 1576 / NBRC 3972 / NCIMB 8545 / WDCM 00012 / Crooks)).